The sequence spans 111 residues: Phosphoribosyl-ATP pyrophosphatase (111 aa).

This sequence belongs to the PRA-PH family.

The protein localises to the cytoplasm. The catalysed reaction is 1-(5-phospho-beta-D-ribosyl)-ATP + H2O = 1-(5-phospho-beta-D-ribosyl)-5'-AMP + diphosphate + H(+). It participates in amino-acid biosynthesis; L-histidine biosynthesis; L-histidine from 5-phospho-alpha-D-ribose 1-diphosphate: step 2/9. In Azotobacter vinelandii (strain DJ / ATCC BAA-1303), this protein is Phosphoribosyl-ATP pyrophosphatase.